Reading from the N-terminus, the 670-residue chain is DNA ligase (670 aa).

NAD(+) contacts are provided by residues 32–36 (DSEYD), 81–82 (SL), and Glu114. Lys116 functions as the N6-AMP-lysine intermediate in the catalytic mechanism. Arg137, Glu174, Lys291, and Lys315 together coordinate NAD(+). Zn(2+)-binding residues include Cys409, Cys412, Cys427, and Cys433. In terms of domain architecture, BRCT spans 592-670 (ASENLFKDKT…EEEFLAQITR (79 aa)).

This sequence belongs to the NAD-dependent DNA ligase family. LigA subfamily. Mg(2+) serves as cofactor. Mn(2+) is required as a cofactor.

It catalyses the reaction NAD(+) + (deoxyribonucleotide)n-3'-hydroxyl + 5'-phospho-(deoxyribonucleotide)m = (deoxyribonucleotide)n+m + AMP + beta-nicotinamide D-nucleotide.. Functionally, DNA ligase that catalyzes the formation of phosphodiester linkages between 5'-phosphoryl and 3'-hydroxyl groups in double-stranded DNA using NAD as a coenzyme and as the energy source for the reaction. It is essential for DNA replication and repair of damaged DNA. This Haemophilus influenzae (strain PittEE) protein is DNA ligase.